Reading from the N-terminus, the 484-residue chain is Serine/threonine-protein kinase RIO1 (484 aa).

Positions A76–S402 constitute a Protein kinase domain. 2 residues coordinate ATP: K125 and L198. The active-site Proton acceptor is the D244. 2 residues coordinate Mg(2+): N249 and D261. Catalysis depends on D261, which acts as the 4-aspartylphosphate intermediate. The segment at D398–K484 is disordered. A phosphoserine; by CK2 mark is found at S402, S403, S409, S416, S417, and S419. An interaction with CKA2 region spans residues S403–K484. A compositionally biased stretch (acidic residues) spans E407 to E434. Positions G440–K484 are association with (pre-)40S ribosomal subunit. Basic and acidic residues predominate over residues K442–R461. Basic residues predominate over residues E462–K484.

It belongs to the protein kinase superfamily. RIO-type Ser/Thr kinase family. Interacts with CKA2. Mg(2+) serves as cofactor. In terms of processing, autophosphorylated. Phosphorylated by casein kinase II (CK2). Phosphorylation by CK2 stimulates RIO1 kinase activity and targets it for degradation at the G1/S transition of the cell cycle.

Its subcellular location is the cytoplasm. It carries out the reaction L-seryl-[protein] + ATP = O-phospho-L-seryl-[protein] + ADP + H(+). It catalyses the reaction L-threonyl-[protein] + ATP = O-phospho-L-threonyl-[protein] + ADP + H(+). The catalysed reaction is ATP + H2O = ADP + phosphate + H(+). In terms of biological role, required for the final endonucleolytic cleavage at site D converting 20S pre-rRNA into the mature 18S rRNA. Required for the final steps of cytoplasmic maturation of the 40S ribosomal subunit. The association with the very late 40S subunit intermediate seems to follow RIO2 association with precursors of the 40S subunit and may involve a translation-like checkpoint point cycle preceeding the binding to the 60S ribosomal subunit. Despite the protein kinase domain is proposed to act predominantly as an ATPase. The catalytic activity regulates its dynamic association with the 40S subunit. Has a role in the cell cycle where it is required for entrance into S-phase and in the control of the onset of anaphase. Appears to also be involved in the maintenance of chromosome stability and correct mitotic segregation. The sequence is that of Serine/threonine-protein kinase RIO1 (RIO1) from Saccharomyces cerevisiae (strain ATCC 204508 / S288c) (Baker's yeast).